A 631-amino-acid polypeptide reads, in one-letter code: Phosphomethylpyrimidine synthase (631 aa).

Residues asparagine 239, methionine 268, tyrosine 297, histidine 333, 353–355 (SRG), 394–397 (DGLR), and glutamate 433 contribute to the substrate site. Residue histidine 437 coordinates Zn(2+). Tyrosine 460 contacts substrate. Histidine 501 is a Zn(2+) binding site. Cysteine 581, cysteine 584, and cysteine 589 together coordinate [4Fe-4S] cluster.

The protein belongs to the ThiC family. In terms of assembly, homodimer. The cofactor is [4Fe-4S] cluster.

It catalyses the reaction 5-amino-1-(5-phospho-beta-D-ribosyl)imidazole + S-adenosyl-L-methionine = 4-amino-2-methyl-5-(phosphooxymethyl)pyrimidine + CO + 5'-deoxyadenosine + formate + L-methionine + 3 H(+). It participates in cofactor biosynthesis; thiamine diphosphate biosynthesis. Catalyzes the synthesis of the hydroxymethylpyrimidine phosphate (HMP-P) moiety of thiamine from aminoimidazole ribotide (AIR) in a radical S-adenosyl-L-methionine (SAM)-dependent reaction. The chain is Phosphomethylpyrimidine synthase from Escherichia fergusonii (strain ATCC 35469 / DSM 13698 / CCUG 18766 / IAM 14443 / JCM 21226 / LMG 7866 / NBRC 102419 / NCTC 12128 / CDC 0568-73).